The following is a 344-amino-acid chain: 4-hydroxy-3-methylbut-2-en-1-yl diphosphate synthase (flavodoxin) (344 aa).

Positions 253, 256, 288, and 295 each coordinate [4Fe-4S] cluster.

Belongs to the IspG family. Requires [4Fe-4S] cluster as cofactor.

The enzyme catalyses (2E)-4-hydroxy-3-methylbut-2-enyl diphosphate + oxidized [flavodoxin] + H2O + 2 H(+) = 2-C-methyl-D-erythritol 2,4-cyclic diphosphate + reduced [flavodoxin]. The protein operates within isoprenoid biosynthesis; isopentenyl diphosphate biosynthesis via DXP pathway; isopentenyl diphosphate from 1-deoxy-D-xylulose 5-phosphate: step 5/6. Converts 2C-methyl-D-erythritol 2,4-cyclodiphosphate (ME-2,4cPP) into 1-hydroxy-2-methyl-2-(E)-butenyl 4-diphosphate. In Thermotoga petrophila (strain ATCC BAA-488 / DSM 13995 / JCM 10881 / RKU-1), this protein is 4-hydroxy-3-methylbut-2-en-1-yl diphosphate synthase (flavodoxin).